We begin with the raw amino-acid sequence, 211 residues long: PLAKKHNVKILPADSEHSAIFQCIQGLPEGALRRIILTASGGAFRDLPVEKLKEVKVADALKHPNWNMGKKITVDSATLFNKGLEVIEAHYLFGAEYDDIEIVIHPQSIIHSMVETQDSSVLAQLGWPDMRLPILYTLSWPERVYCSEITWPRLDLCNVDLTFKKPDHVKYPSMDLAYAAGRAGGTMTGVLSAANEKAVEMFIDEKISYLD.

A Mn(2+)-binding site is contributed by D14. Positions 15, 16, 40, 63, 76, 81, 82, and 85 each coordinate 1-deoxy-D-xylulose 5-phosphate. A Mn(2+)-binding site is contributed by E16. Mn(2+) is bound at residue E85.

Belongs to the DXR family. It depends on Mn(2+) as a cofactor. Mg(2+) is required as a cofactor. As to expression, mostly expressed in flowers and, to a lower extent, in leaves.

The protein resides in the plastid. Its subcellular location is the chloroplast stroma. It catalyses the reaction 2-C-methyl-D-erythritol 4-phosphate + NADP(+) = 1-deoxy-D-xylulose 5-phosphate + NADPH + H(+). Its pathway is isoprenoid biosynthesis; isopentenyl diphosphate biosynthesis via DXP pathway; isopentenyl diphosphate from 1-deoxy-D-xylulose 5-phosphate: step 1/6. In terms of biological role, enzyme of the plastid non-mevalonate pathway for isoprenoid biosynthesis that catalyzes the NADPH-dependent rearrangement and reduction of 1-deoxy-D-xylulose-5-phosphate (DXP) to 2-C-methyl-D-erythritol 4-phosphate (MEP). Required for chloroplast development. This is 1-deoxy-D-xylulose 5-phosphate reductoisomerase from Thymus vulgaris (Thyme).